The chain runs to 442 residues: Trigger factor (442 aa).

Positions 165 to 250 (DDRVIIDFEG…LQKVMAPELP (86 aa)) constitute a PPIase FKBP-type domain.

This sequence belongs to the FKBP-type PPIase family. Tig subfamily.

The protein resides in the cytoplasm. The catalysed reaction is [protein]-peptidylproline (omega=180) = [protein]-peptidylproline (omega=0). Functionally, involved in protein export. Acts as a chaperone by maintaining the newly synthesized protein in an open conformation. Functions as a peptidyl-prolyl cis-trans isomerase. In Coxiella burnetii (strain CbuK_Q154) (Coxiella burnetii (strain Q154)), this protein is Trigger factor.